Consider the following 690-residue polypeptide: Crooked neck-like protein 1 (690 aa).

HAT repeat units follow at residues 61-93 (DYKL…WEES), 95-127 (KEIQ…MEMK), 129-161 (RQVN…MEEM), 163-194 (GNVA…FELR), 196-227 (KEVE…FEEK), 229-264 (AYFA…FEEN), 266-300 (KEFE…FEKK), 310-342 (IIVS…LVES), 344-378 (AEAD…LWVN), 388-424 (KDPE…FEIR), 459-491 (REFD…LETI), 493-527 (GDIE…FEIE), 529-560 (EETE…FELS), 565-606 (GSVA…EFGT), 608-646 (SDKE…YIFP), and 648-673 (DAAN…EREA). Residues 250–467 (MDEHLYVAFA…LREFDRCRKL (218 aa)) are mediates interaction with HSP90. Ser342 is modified (phosphoserine). The short motif at 618–626 (PEKVKKRRK) is the Nuclear localization signal element. Residues 667-679 (QQQEREAAEQDPD) are compositionally biased toward basic and acidic residues. The interval 667 to 690 (QQQEREAAEQDPDKDIDESESSSF) is disordered. The span at 680 to 690 (KDIDESESSSF) shows a compositional bias: acidic residues. Ser689 is subject to Phosphoserine.

Belongs to the crooked-neck family. As to quaternary structure, identified in the spliceosome C complex. Present in a spliceosome complex assembled in vitro containing CRNKL1, HPRP8BP and SNRPB2. Component of the minor spliceosome, which splices U12-type introns. Interacts with PPIL2 (via the PPIase cyclophilin-type domain); they may form a trimeric complex with HSP90.

Its subcellular location is the nucleus. It is found in the nucleus speckle. In terms of biological role, involved in pre-mRNA splicing process. As a component of the minor spliceosome, involved in the splicing of U12-type introns in pre-mRNAs. The protein is Crooked neck-like protein 1 (Crnkl1) of Mus musculus (Mouse).